Here is a 3013-residue protein sequence, read N- to C-terminus: Protein furry homolog-like (3013 aa).

The residue at position 2 (S2) is an N-acetylserine. A disordered region spans residues 90-109 (DESYEYRPRSSTKSKGDEQQ). At S844 the chain carries Phosphoserine. Disordered stretches follow at residues 878 to 897 (SSST…LAST) and 1476 to 1498 (VTSG…PDNK). The span at 1476–1486 (VTSGTTSSSNT) shows a compositional bias: low complexity. Residues S1914, S1935, S1941, S1945, and S1957 each carry the phosphoserine modification. Phosphothreonine is present on T1959. A phosphoserine mark is found at S1978, S2272, and S2454. The tract at residues 2459–2492 (DKGDTPSLQEYQCSSSTPSLNLTNQEDTDESSEE) is disordered. The span at 2464-2483 (PSLQEYQCSSSTPSLNLTNQ) shows a compositional bias: polar residues. S2499 is subject to Phosphoserine. Disordered regions lie at residues 2508–2567 (LNSD…DTTS) and 2636–2660 (EEEA…EVQT). Polar residues-rich tracts occupy residues 2528 to 2539 (SEDSTGSITTEE) and 2555 to 2567 (DNAN…DTTS).

It belongs to the furry protein family. As to expression, widely expressed with higher expression in colon, placenta, brain and cells of lymphoid origin.

Its function is as follows. Plays a key role in maintaining the integrity of polarized cell extensions during morphogenesis, regulates the actin cytoskeleton and plays a key role in patterning sensory neuron dendritic fields by promoting avoidance between homologous dendrites as well as by limiting dendritic branching. May function as a transcriptional activator. The polypeptide is Protein furry homolog-like (FRYL) (Homo sapiens (Human)).